A 320-amino-acid polypeptide reads, in one-letter code: Protein U25 (320 aa).

Belongs to the herpesviridae US22 family.

This is Protein U25 (U25) from Human herpesvirus 7 (strain JI) (HHV-7).